Consider the following 367-residue polypeptide: Dual-specificity RNA methyltransferase RlmN (367 aa).

Glu91 functions as the Proton acceptor in the catalytic mechanism. The region spanning 102-337 (GKVRMTQCLS…AIIRKSKGQD (236 aa)) is the Radical SAM core domain. The cysteines at positions 109 and 342 are disulfide-linked. Cys116, Cys120, and Cys123 together coordinate [4Fe-4S] cluster. S-adenosyl-L-methionine contacts are provided by residues 169–170 (GE), Ser201, 223–225 (SLH), and Asn299. Cys342 serves as the catalytic S-methylcysteine intermediate.

Belongs to the radical SAM superfamily. RlmN family. It depends on [4Fe-4S] cluster as a cofactor.

Its subcellular location is the cytoplasm. It catalyses the reaction adenosine(2503) in 23S rRNA + 2 reduced [2Fe-2S]-[ferredoxin] + 2 S-adenosyl-L-methionine = 2-methyladenosine(2503) in 23S rRNA + 5'-deoxyadenosine + L-methionine + 2 oxidized [2Fe-2S]-[ferredoxin] + S-adenosyl-L-homocysteine. The catalysed reaction is adenosine(37) in tRNA + 2 reduced [2Fe-2S]-[ferredoxin] + 2 S-adenosyl-L-methionine = 2-methyladenosine(37) in tRNA + 5'-deoxyadenosine + L-methionine + 2 oxidized [2Fe-2S]-[ferredoxin] + S-adenosyl-L-homocysteine. Functionally, specifically methylates position 2 of adenine 2503 in 23S rRNA and position 2 of adenine 37 in tRNAs. m2A2503 modification seems to play a crucial role in the proofreading step occurring at the peptidyl transferase center and thus would serve to optimize ribosomal fidelity. This chain is Dual-specificity RNA methyltransferase RlmN, found in Nitratidesulfovibrio vulgaris (strain DSM 19637 / Miyazaki F) (Desulfovibrio vulgaris).